Reading from the N-terminus, the 126-residue chain is Glycine cleavage system H protein (126 aa).

A Lipoyl-binding domain is found at 21–103 (TATIGISEHA…YEGGWIVKVK (83 aa)). At Lys62 the chain carries N6-lipoyllysine.

The protein belongs to the GcvH family. The glycine cleavage system is composed of four proteins: P, T, L and H. Requires (R)-lipoate as cofactor.

Its function is as follows. The glycine cleavage system catalyzes the degradation of glycine. The H protein shuttles the methylamine group of glycine from the P protein to the T protein. The protein is Glycine cleavage system H protein of Vibrio campbellii (strain ATCC BAA-1116).